Here is a 428-residue protein sequence, read N- to C-terminus: Enolase (428 aa).

(2R)-2-phosphoglycerate is bound at residue Q163. The Proton donor role is filled by E205. Positions 242, 283, and 310 each coordinate Mg(2+). (2R)-2-phosphoglycerate contacts are provided by K335, R364, S365, and K386. K335 (proton acceptor) is an active-site residue.

The protein belongs to the enolase family. The cofactor is Mg(2+).

Its subcellular location is the cytoplasm. It localises to the secreted. It is found in the cell surface. It catalyses the reaction (2R)-2-phosphoglycerate = phosphoenolpyruvate + H2O. The protein operates within carbohydrate degradation; glycolysis; pyruvate from D-glyceraldehyde 3-phosphate: step 4/5. Functionally, catalyzes the reversible conversion of 2-phosphoglycerate (2-PG) into phosphoenolpyruvate (PEP). It is essential for the degradation of carbohydrates via glycolysis. The protein is Enolase of Saccharopolyspora erythraea (strain ATCC 11635 / DSM 40517 / JCM 4748 / NBRC 13426 / NCIMB 8594 / NRRL 2338).